The sequence spans 290 residues: Lipoyl synthase 2 (290 aa).

The [4Fe-4S] cluster site is built by cysteine 37, cysteine 42, cysteine 48, cysteine 63, cysteine 67, cysteine 70, and serine 283. The Radical SAM core domain occupies 49–272 (YGQKTATFLL…GNIARELGFS (224 aa)).

It belongs to the radical SAM superfamily. Lipoyl synthase family. [4Fe-4S] cluster is required as a cofactor.

It is found in the cytoplasm. It catalyses the reaction [[Fe-S] cluster scaffold protein carrying a second [4Fe-4S](2+) cluster] + N(6)-octanoyl-L-lysyl-[protein] + 2 oxidized [2Fe-2S]-[ferredoxin] + 2 S-adenosyl-L-methionine + 4 H(+) = [[Fe-S] cluster scaffold protein] + N(6)-[(R)-dihydrolipoyl]-L-lysyl-[protein] + 4 Fe(3+) + 2 hydrogen sulfide + 2 5'-deoxyadenosine + 2 L-methionine + 2 reduced [2Fe-2S]-[ferredoxin]. The protein operates within protein modification; protein lipoylation via endogenous pathway; protein N(6)-(lipoyl)lysine from octanoyl-[acyl-carrier-protein]: step 2/2. Its function is as follows. Catalyzes the radical-mediated insertion of two sulfur atoms into the C-6 and C-8 positions of the octanoyl moiety bound to the lipoyl domains of lipoate-dependent enzymes, thereby converting the octanoylated domains into lipoylated derivatives. In Thermosynechococcus vestitus (strain NIES-2133 / IAM M-273 / BP-1), this protein is Lipoyl synthase 2.